Consider the following 454-residue polypeptide: Carbon catabolite repressor protein 4 homolog 5 (454 aa).

The interval M1–E76 is disordered. Residues V31–I41 show a composition bias toward basic and acidic residues. Residues V61–K75 show a composition bias toward basic residues. E153 contacts Mg(2+).

It belongs to the CCR4/nocturin family. In terms of assembly, component of the CCR4-NOT complex, at least composed of CRR4 and CAF1 proteins. The cofactor is Mg(2+).

It is found in the nucleus. Its subcellular location is the cytoplasm. The catalysed reaction is Exonucleolytic cleavage of poly(A) to 5'-AMP.. Acts as a catalytic component of the CCR4-NOT core complex, which in the nucleus seems to be a general transcription factor, and in the cytoplasm the major mRNA deadenylase involved in mRNA turnover. The protein is Carbon catabolite repressor protein 4 homolog 5 (CCR4-5) of Arabidopsis thaliana (Mouse-ear cress).